The sequence spans 757 residues: MDVNPTLLFLKIPAQNAISTTFPYTGDPPYSHGTGTGYTMDTVNRTHQYSEKGKWKTNTETGAPQLNPIDGPLPEDNEPSGYAQTDCVLEAVAFLEESHPGIFENSCLETMEVIQQTRVDKLTQGRQTYDWTLNRNQPAATALANTIEVFRSNGLTANESGRLIDLLRDVMDSMDKEEMEITTHFQRKRRVRDNMTKKMVTQRTIGKKKQRLNKRSYLIRALTLNTMTKDAERGKLKRRAIATPGMQIRGFVYFVETLARSICEKLEQSGLPVGGNEKKAKLANVVRKMMTNSQDTELSFTITGDNTKWNENQNPRMFLAMITYITRNQPEWFRNVLSIAPIMFSNKMARLGKGYMFESKSMKLRTQIPAEMLANIDLKYFNESTRKKIEKIRPLLIDGTASLSPGMMMGMFNMLSTVLGVSILNLGQKRYTKTTYWWDGLQSSDDFALIVNAPNHEGIQAGVDRFYRTCKLVGINMSKKKSYINRTGTFEFTSFFYRYGFVANFSMELPSFGVSGINESADMSIGVTVIKNNMINNDLGPATAQMALQLFIKDYRYTYRCHRGDTQIQTRRSFELKKLWEQTRSKAGLLVSDGGPNLYNIRNLHIPEVCLKWELMDEDYQGRLCNPLNPFVSHKEIESVNNAVVMPAHGPAKSMEYDAVATTHSWIPKRNRSILNTNQRGILEDEQMYQKCCNLFEKFFPSSSYRRPVGISSMVEAMVSRARIDARIDFESGRIKKEEFAEIMKICSTIEELRRQK.

The interval 50–71 (SEKGKWKTNTETGAPQLNPIDG) is disordered. Short sequence motifs (nuclear localization signal) lie at residues 187–195 (RKRRVRDNM) and 203–216 (RTIG…NKRS). A promoter-binding site region spans residues 249–256 (RGFVYFVE). The RdRp catalytic domain maps to 286 to 483 (VRKMMTNSQD…GINMSKKKSY (198 aa)).

The protein belongs to the influenza viruses polymerase PB1 family. As to quaternary structure, influenza RNA polymerase is composed of three subunits: PB1, PB2 and PA. Interacts (via N-terminus) with PA (via C-terminus). Interacts (via C-terminus) with PB2 (via N-terminus); this interaction is essential for transcription initiation. Phosphorylated by host PRKCA.

The protein localises to the host nucleus. Its subcellular location is the host cytoplasm. It carries out the reaction RNA(n) + a ribonucleoside 5'-triphosphate = RNA(n+1) + diphosphate. Functionally, RNA-dependent RNA polymerase which is responsible for replication and transcription of virus RNA segments. The transcription of viral mRNAs occurs by a unique mechanism called cap-snatching. 5' methylated caps of cellular mRNAs are cleaved after 10-13 nucleotides by PA. In turn, these short capped RNAs are used as primers by PB1 for transcription of viral mRNAs. During virus replication, PB1 initiates RNA synthesis and copy vRNA into complementary RNA (cRNA) which in turn serves as a template for the production of more vRNAs. The chain is RNA-directed RNA polymerase catalytic subunit from Influenza A virus (strain A/Seal/Massachusetts/1/1980 H7N7).